The primary structure comprises 123 residues: uncharacterized protein (123 aa).

The 101-residue stretch at 17–117 (SNDNAFLVDV…NNQDKGWKQN (101 aa)) folds into the Rhodanese domain.

This is an uncharacterized protein from Rickettsia conorii (strain ATCC VR-613 / Malish 7).